The chain runs to 161 residues: DNA endonuclease I-CvuI (161 aa).

The protein belongs to the LAGLIDADG endonuclease family.

Its subcellular location is the plastid. It is found in the chloroplast. Functionally, probable endonuclease involved in intron homing. This Chlorella vulgaris (Green alga) protein is DNA endonuclease I-CvuI.